A 223-amino-acid polypeptide reads, in one-letter code: DNA mismatch repair protein MutH (223 aa).

The protein belongs to the MutH family.

Its subcellular location is the cytoplasm. In terms of biological role, sequence-specific endonuclease that cleaves unmethylated GATC sequences. It is involved in DNA mismatch repair. The protein is DNA mismatch repair protein MutH of Shewanella baltica (strain OS195).